The sequence spans 302 residues: Probable alpha-L-glutamate ligase (302 aa).

The ATP-grasp domain occupies 104–287 (LQLLSRKGVG…VAGLLIKFIE (184 aa)). Residues lysine 141, 178–179 (EY), aspartate 187, and 211–213 (RSN) each bind ATP. Positions 248, 260, and 262 each coordinate Mg(2+). Aspartate 248, glutamate 260, and asparagine 262 together coordinate Mn(2+).

This sequence belongs to the RimK family. Requires Mg(2+) as cofactor. The cofactor is Mn(2+).

This is Probable alpha-L-glutamate ligase from Alcanivorax borkumensis (strain ATCC 700651 / DSM 11573 / NCIMB 13689 / SK2).